Reading from the N-terminus, the 215-residue chain is Probable phosphoglycerate mutase GpmB (215 aa).

Substrate-binding positions include 8–15 (RHGETQWN), 21–22 (QG), arginine 58, lysine 60, 82–85 (ELDM), 104–105 (RR), and 151–152 (GI). Histidine 9 functions as the Tele-phosphohistidine intermediate in the catalytic mechanism. Residue glutamate 82 is the Proton donor/acceptor of the active site.

The protein belongs to the phosphoglycerate mutase family. GpmB subfamily.

It carries out the reaction (2R)-2-phosphoglycerate = (2R)-3-phosphoglycerate. It participates in carbohydrate degradation; glycolysis; pyruvate from D-glyceraldehyde 3-phosphate: step 3/5. In Salmonella arizonae (strain ATCC BAA-731 / CDC346-86 / RSK2980), this protein is Probable phosphoglycerate mutase GpmB.